A 155-amino-acid chain; its full sequence is Pathogenesis-related protein A (155 aa).

Belongs to the BetVI family.

The polypeptide is Pathogenesis-related protein A (PCPR1-1) (Petroselinum crispum (Parsley)).